A 216-amino-acid polypeptide reads, in one-letter code: Kynurenine formamidase (216 aa).

Phenylalanine 21 serves as a coordination point for substrate. Zn(2+) is bound by residues histidine 51, histidine 55, and aspartate 57. Histidine 61 acts as the Proton donor/acceptor in catalysis. 2 residues coordinate Zn(2+): histidine 167 and glutamate 179.

This sequence belongs to the Cyclase 1 superfamily. KynB family. As to quaternary structure, homodimer. Requires Zn(2+) as cofactor.

It catalyses the reaction N-formyl-L-kynurenine + H2O = L-kynurenine + formate + H(+). It functions in the pathway amino-acid degradation; L-tryptophan degradation via kynurenine pathway; L-kynurenine from L-tryptophan: step 2/2. In terms of biological role, catalyzes the hydrolysis of N-formyl-L-kynurenine to L-kynurenine, the second step in the kynurenine pathway of tryptophan degradation. This chain is Kynurenine formamidase, found in Paracidovorax citrulli (strain AAC00-1) (Acidovorax citrulli).